The following is a 1379-amino-acid chain: DNA-directed RNA polymerase subunit beta (1379 aa).

This sequence belongs to the RNA polymerase beta chain family. As to quaternary structure, the RNAP catalytic core consists of 2 alpha, 1 beta, 1 beta' and 1 omega subunit. When a sigma factor is associated with the core the holoenzyme is formed, which can initiate transcription.

The enzyme catalyses RNA(n) + a ribonucleoside 5'-triphosphate = RNA(n+1) + diphosphate. Functionally, DNA-dependent RNA polymerase catalyzes the transcription of DNA into RNA using the four ribonucleoside triphosphates as substrates. This is DNA-directed RNA polymerase subunit beta from Rhizobium etli (strain ATCC 51251 / DSM 11541 / JCM 21823 / NBRC 15573 / CFN 42).